We begin with the raw amino-acid sequence, 411 residues long: Putative competence-damage inducible protein (411 aa).

Belongs to the CinA family.

The chain is Putative competence-damage inducible protein from Caldicellulosiruptor saccharolyticus (strain ATCC 43494 / DSM 8903 / Tp8T 6331).